The chain runs to 479 residues: Anaerobic nitric oxide reductase flavorubredoxin (479 aa).

Residues 30–210 form a zinc metallo-hydrolase region; the sequence is LRGSSYNSYL…PFSRLVTPKI (181 aa). Fe cation-binding residues include H79, E81, D83, H147, D166, and H227. The 140-residue stretch at 254-393 folds into the Flavodoxin-like domain; the sequence is ITIFYDTMSN…LCREHGREIA (140 aa). Residues 260–264 and 342–369 contribute to the FMN site; these read TMSNN and AFGSHGWSGGAVDRLSTRLQDAGFEMSL. One can recognise a Rubredoxin-like domain in the interval 423–474; it reads GPRMQCSVCQWIYDPAKGEPMQDVAPGTPWSEVPDNFLCPECSLGKDVFEEL. Fe cation is bound by residues C428, C431, C461, and C464.

In the N-terminal section; belongs to the zinc metallo-hydrolase group 3 family. As to quaternary structure, homotetramer. Requires Fe cation as cofactor. It depends on FMN as a cofactor.

The protein localises to the cytoplasm. Its pathway is nitrogen metabolism; nitric oxide reduction. Anaerobic nitric oxide reductase; uses NADH to detoxify nitric oxide (NO), protecting several 4Fe-4S NO-sensitive enzymes. Has at least 2 reductase partners, only one of which (NorW, flavorubredoxin reductase) has been identified. NO probably binds to the di-iron center; electrons enter from the NorW at rubredoxin and are transferred sequentially to the FMN center and the di-iron center. Also able to function as an aerobic oxygen reductase. In Shigella dysenteriae serotype 1 (strain Sd197), this protein is Anaerobic nitric oxide reductase flavorubredoxin.